The following is a 273-amino-acid chain: 2,3,4,5-tetrahydropyridine-2,6-dicarboxylate N-succinyltransferase (273 aa).

Substrate is bound by residues Arg-104 and Asp-141.

It belongs to the transferase hexapeptide repeat family. As to quaternary structure, homotrimer.

It is found in the cytoplasm. It carries out the reaction (S)-2,3,4,5-tetrahydrodipicolinate + succinyl-CoA + H2O = (S)-2-succinylamino-6-oxoheptanedioate + CoA. Its pathway is amino-acid biosynthesis; L-lysine biosynthesis via DAP pathway; LL-2,6-diaminopimelate from (S)-tetrahydrodipicolinate (succinylase route): step 1/3. This chain is 2,3,4,5-tetrahydropyridine-2,6-dicarboxylate N-succinyltransferase, found in Nitrosomonas eutropha (strain DSM 101675 / C91 / Nm57).